The chain runs to 525 residues: Serine/threonine protein phosphatase 2A 55 kDa regulatory subunit B beta isoform (525 aa).

Positions 1 to 30 are disordered; it reads MDPSSKSPDDDDLRPEAEAARRPQPQPQPR. WD repeat units follow at residues 48–87 and 124–165; these read QEVD…DSAS and EIEE…VKRI. Positions 169-191 are disordered; it reads NLNTSQSSGNGTTSSSSSSSSRA. The segment covering 171-189 has biased composition (low complexity); that stretch reads NTSQSSGNGTTSSSSSSSS. WD repeat units follow at residues 244 to 282, 293 to 333, 352 to 390, and 495 to 525; these read AHDY…QSFN, DLTE…LCDN, EIIA…GPVA, and DLST…MYYA.

The protein belongs to the phosphatase 2A regulatory subunit B family. In terms of assembly, PP2A consists of a common heteromeric enzyme, composed of a catalytic subunit (subunits C), a constant regulatory subunit (subunit A), and a variety of regulatory subunits such as subunits B (the R2/B/PR55/B55, R3/B''/PR72/PR130/PR59 and R5/B'/B56 families).

Its function is as follows. The B regulatory subunit may modulate substrate selectivity and catalytic activity, and may also direct the localization of the catalytic enzyme to a particular subcellular compartment. The sequence is that of Serine/threonine protein phosphatase 2A 55 kDa regulatory subunit B beta isoform from Oryza sativa subsp. japonica (Rice).